The sequence spans 189 residues: Adenylate kinase homolog MTH_1663 (189 aa).

12–20 (GVPGTGKTT) provides a ligand contact to ATP.

The protein belongs to the archaeal adenylate kinase family.

This chain is Adenylate kinase homolog MTH_1663, found in Methanothermobacter thermautotrophicus (strain ATCC 29096 / DSM 1053 / JCM 10044 / NBRC 100330 / Delta H) (Methanobacterium thermoautotrophicum).